The primary structure comprises 181 residues: Transcription antitermination protein NusB (181 aa).

The segment at 1 to 36 (MTEDNNKAAGAKPRPARQVRTGLTSTGARKASAKSN) is disordered.

The protein belongs to the NusB family.

Involved in transcription antitermination. Required for transcription of ribosomal RNA (rRNA) genes. Binds specifically to the boxA antiterminator sequence of the ribosomal RNA (rrn) operons. The polypeptide is Transcription antitermination protein NusB (Variovorax paradoxus (strain S110)).